Reading from the N-terminus, the 209-residue chain is UPF0319 protein VF_1616 (209 aa).

The N-terminal stretch at 1–21 (MKIQSIFAASFCLLSSISAHA) is a signal peptide.

Belongs to the UPF0319 family.

The sequence is that of UPF0319 protein VF_1616 from Aliivibrio fischeri (strain ATCC 700601 / ES114) (Vibrio fischeri).